Consider the following 245-residue polypeptide: Probable proteasome subunit alpha type-2 (245 aa).

Belongs to the peptidase T1A family. The 26S proteasome consists of a 20S proteasome core and two 19S regulatory subunits. The 20S proteasome core is composed of 28 subunits that are arranged in four stacked rings, resulting in a barrel-shaped structure. The two end rings are each formed by seven alpha subunits, and the two central rings are each formed by seven beta subunits. The catalytic chamber with the active sites is on the inside of the barrel.

The protein resides in the cytoplasm. Its subcellular location is the nucleus. The proteasome is a multicatalytic proteinase complex which is characterized by its ability to cleave peptides with Arg, Phe, Tyr, Leu, and Glu adjacent to the leaving group at neutral or slightly basic pH. The proteasome has an ATP-dependent proteolytic activity. This Schizosaccharomyces pombe (strain 972 / ATCC 24843) (Fission yeast) protein is Probable proteasome subunit alpha type-2 (pre8).